Here is a 260-residue protein sequence, read N- to C-terminus: Ribosome maturation factor RimP (260 aa).

The interval Gln-198 to Glu-260 is disordered. Basic and acidic residues-rich tracts occupy residues Ala-210–Lys-228 and Asn-238–Ile-254.

It belongs to the RimP family.

Its subcellular location is the cytoplasm. Required for maturation of 30S ribosomal subunits. The chain is Ribosome maturation factor RimP from Nitrobacter winogradskyi (strain ATCC 25391 / DSM 10237 / CIP 104748 / NCIMB 11846 / Nb-255).